We begin with the raw amino-acid sequence, 168 residues long: Disulfide bond formation protein B (168 aa).

The Cytoplasmic segment spans residues 1–13 (MFLTYFDAMPRRV). The helical transmembrane segment at 14–30 (LALVSLACVALLAFGLY) threads the bilayer. Residues 31-48 (LQHVVGLEPCPMCIVQRY) lie on the Periplasmic side of the membrane. A disulfide bond links Cys40 and Cys43. The chain crosses the membrane as a helical span at residues 49–64 (ALVLVAVVAGITAVAK). The Cytoplasmic segment spans residues 65-70 (SRGLLI). A helical transmembrane segment spans residues 71 to 88 (TGSGLLVLLSGFGAFVAA). Topologically, residues 89 to 144 (RQSFLQWYPPEVASCGRDFYGMIETFPLKRAIPMIFKGSGDCTKIDWTFLGLSIAN) are periplasmic. Cys103 and Cys130 are oxidised to a cystine. A helical transmembrane segment spans residues 145 to 163 (WSFLCFVAIALVGLVLITR). The Cytoplasmic portion of the chain corresponds to 164–168 (LARQR).

Belongs to the DsbB family.

The protein resides in the cell inner membrane. Functionally, required for disulfide bond formation in some periplasmic proteins. Acts by oxidizing the DsbA protein. The sequence is that of Disulfide bond formation protein B from Polaromonas sp. (strain JS666 / ATCC BAA-500).